The following is a 350-amino-acid chain: C-X-C chemokine receptor type 1 (350 aa).

Residues 1–39 (MSNITDPQMWDFDDLNFTGMPPADEDYSPCMLETETLNK) are Extracellular-facing. Residues asparagine 3 and asparagine 16 are each glycosylated (N-linked (GlcNAc...) asparagine). Residues 40 to 66 (YVVIIAYALVFLLSLLGNSLVMLVILY) form a helical membrane-spanning segment. Over 67–75 (SRVGRSVTD) the chain is Cytoplasmic. A helical membrane pass occupies residues 76–96 (VYLLNLALADLLFALTLPIWA). Residues 97-111 (ASKVNGWIFGTFLCK) lie on the Extracellular side of the membrane. Cysteine 110 and cysteine 187 are oxidised to a cystine. Residues 112-133 (VVSLLKEVNFYSGILLLACISV) traverse the membrane as a helical segment. Topologically, residues 134 to 154 (DRYLAIVHATRTLTQKRHLVK) are cytoplasmic. Residues 155–174 (FVCLGCWGLSMNLSLPFFLF) form a helical membrane-spanning segment. Residues 175–199 (RQAYHPNNSSPVCYEVLGNDTAKWR) lie on the Extracellular side of the membrane. A helical transmembrane segment spans residues 200-220 (MVLRILPHTFGFIVPLFVMLF). Residues 221-242 (CYGFTLRTLFKAHMGQKHRAMR) are Cytoplasmic-facing. Residues 243–264 (VIFAVVLIFLLCWLPYNLVLLA) form a helical membrane-spanning segment. Residues 265–285 (DTLMRTQVIQESCERRNNIGR) are Extracellular-facing. Residues 286–308 (ALDATEILGFLHSCLNPIIYAFI) form a helical membrane-spanning segment. The Cytoplasmic portion of the chain corresponds to 309–350 (GQNFRHGFLKILAMHGLVSKEFLARHRVTSYTSSSVNVSSNL).

Belongs to the G-protein coupled receptor 1 family. Interacts with IL8. Interacts with GNAI2.

The protein localises to the cell membrane. Its function is as follows. Receptor to interleukin-8, which is a powerful neutrophils chemotactic factor. Binding of IL-8 to the receptor causes activation of neutrophils. This response is mediated via a G-protein that activates a phosphatidylinositol-calcium second messenger system. In Homo sapiens (Human), this protein is C-X-C chemokine receptor type 1 (CXCR1).